The primary structure comprises 86 residues: Large ribosomal subunit protein bL27 (86 aa).

It belongs to the bacterial ribosomal protein bL27 family.

In Xanthomonas campestris pv. campestris (strain 8004), this protein is Large ribosomal subunit protein bL27.